The primary structure comprises 416 residues: Serine hydroxymethyltransferase (416 aa).

(6S)-5,6,7,8-tetrahydrofolate contacts are provided by residues L118 and 122–124 (GHL). The residue at position 226 (K226) is an N6-(pyridoxal phosphate)lysine. (6S)-5,6,7,8-tetrahydrofolate is bound by residues E242 and 350–352 (SPF).

This sequence belongs to the SHMT family. As to quaternary structure, homodimer. It depends on pyridoxal 5'-phosphate as a cofactor.

Its subcellular location is the cytoplasm. The catalysed reaction is (6R)-5,10-methylene-5,6,7,8-tetrahydrofolate + glycine + H2O = (6S)-5,6,7,8-tetrahydrofolate + L-serine. The protein operates within one-carbon metabolism; tetrahydrofolate interconversion. It participates in amino-acid biosynthesis; glycine biosynthesis; glycine from L-serine: step 1/1. Catalyzes the reversible interconversion of serine and glycine with tetrahydrofolate (THF) serving as the one-carbon carrier. This reaction serves as the major source of one-carbon groups required for the biosynthesis of purines, thymidylate, methionine, and other important biomolecules. Also exhibits THF-independent aldolase activity toward beta-hydroxyamino acids, producing glycine and aldehydes, via a retro-aldol mechanism. This is Serine hydroxymethyltransferase from Wolinella succinogenes (strain ATCC 29543 / DSM 1740 / CCUG 13145 / JCM 31913 / LMG 7466 / NCTC 11488 / FDC 602W) (Vibrio succinogenes).